The following is a 636-amino-acid chain: Probable potassium transport system protein Kup (636 aa).

12 consecutive transmembrane segments (helical) span residues 23–43, 63–83, 114–134, 150–170, 182–202, 217–237, 260–280, 298–318, 350–370, 379–399, 407–427, and 432–452; these read LVIG…LYSL, IISL…VVFV, VLMM…VITP, PQLS…LFLI, FGPV…YNLV, ISFL…VFLV, WFVL…AMLL, LLIP…QAVI, IYLP…VISF, AYGI…AVVM, PALV…FFAA, and VAEG…LLMT.

The protein belongs to the HAK/KUP transporter (TC 2.A.72) family.

Its subcellular location is the cell inner membrane. The catalysed reaction is K(+)(in) + H(+)(in) = K(+)(out) + H(+)(out). In terms of biological role, transport of potassium into the cell. Likely operates as a K(+):H(+) symporter. The chain is Probable potassium transport system protein Kup from Cupriavidus pinatubonensis (strain JMP 134 / LMG 1197) (Cupriavidus necator (strain JMP 134)).